Here is a 229-residue protein sequence, read N- to C-terminus: Large ribosomal subunit protein uL1 (229 aa).

This sequence belongs to the universal ribosomal protein uL1 family. Part of the 50S ribosomal subunit.

In terms of biological role, binds directly to 23S rRNA. The L1 stalk is quite mobile in the ribosome, and is involved in E site tRNA release. Protein L1 is also a translational repressor protein, it controls the translation of the L11 operon by binding to its mRNA. The polypeptide is Large ribosomal subunit protein uL1 (Histophilus somni (strain 129Pt) (Haemophilus somnus)).